Here is a 730-residue protein sequence, read N- to C-terminus: Elongation factor 2 (730 aa).

Residues 19–260 (VMIRNIAIIA…MVIRFLPSPI (242 aa)) form the tr-type G domain. Residues 28 to 35 (AHIDHGKT), 94 to 98 (DTPGH), and 148 to 151 (NKVD) each bind GTP. Diphthamide is present on His596.

Belongs to the TRAFAC class translation factor GTPase superfamily. Classic translation factor GTPase family. EF-G/EF-2 subfamily.

It is found in the cytoplasm. Its function is as follows. Catalyzes the GTP-dependent ribosomal translocation step during translation elongation. During this step, the ribosome changes from the pre-translocational (PRE) to the post-translocational (POST) state as the newly formed A-site-bound peptidyl-tRNA and P-site-bound deacylated tRNA move to the P and E sites, respectively. Catalyzes the coordinated movement of the two tRNA molecules, the mRNA and conformational changes in the ribosome. This is Elongation factor 2 (fusA) from Methanococcoides methylutens.